The primary structure comprises 346 residues: [LysW]-lysine/[LysW]-ornithine hydrolase (346 aa).

A Zn(2+)-binding site is contributed by H67. The active site involves D69. D91 is a Zn(2+) binding site. The active-site Proton acceptor is the E121. The Zn(2+) site is built by E122, E145, and H316.

Belongs to the peptidase M20A family. LysK subfamily. It depends on Zn(2+) as a cofactor. Requires Co(2+) as cofactor.

It is found in the cytoplasm. It catalyses the reaction [amino-group carrier protein]-C-terminal-gamma-(L-lysyl)-L-glutamate + H2O = [amino-group carrier protein]-C-terminal-L-glutamate + L-lysine. The catalysed reaction is [amino-group carrier protein]-C-terminal-gamma-(L-ornithyl)-L-glutamate + H2O = [amino-group carrier protein]-C-terminal-L-glutamate + L-ornithine. Its pathway is amino-acid biosynthesis; L-lysine biosynthesis via AAA pathway; L-lysine from L-alpha-aminoadipate (Thermus route): step 5/5. The protein operates within amino-acid biosynthesis; L-arginine biosynthesis. Its function is as follows. Catalyzes the release of L-lysine from [LysW]-gamma-L-lysine and the release of L-ornithine from [LysW]-L-ornithine. The protein is [LysW]-lysine/[LysW]-ornithine hydrolase of Sulfurisphaera tokodaii (strain DSM 16993 / JCM 10545 / NBRC 100140 / 7) (Sulfolobus tokodaii).